A 144-amino-acid chain; its full sequence is NADH-ubiquinone oxidoreductase chain 6 (144 aa).

5 helical membrane passes run 1 to 21 (MVKV…INID), 25 to 45 (SSFF…MSMH), 46 to 66 (IWFS…ILVY), 79 to 99 (YMAV…VLTY), and 108 to 128 (FYYS…LFFM).

This sequence belongs to the complex I subunit 6 family.

It localises to the mitochondrion membrane. It catalyses the reaction a ubiquinone + NADH + 5 H(+)(in) = a ubiquinol + NAD(+) + 4 H(+)(out). Functionally, core subunit of the mitochondrial membrane respiratory chain NADH dehydrogenase (Complex I) that is believed to belong to the minimal assembly required for catalysis. Complex I functions in the transfer of electrons from NADH to the respiratory chain. The immediate electron acceptor for the enzyme is believed to be ubiquinone. The chain is NADH-ubiquinone oxidoreductase chain 6 from Caenorhabditis elegans.